Reading from the N-terminus, the 74-residue chain is MEIKYLLTVFLVLLIVSDHCQAFLFSLIPNAISGLLSAFKGRRKRNLDGQIDRFRNFRKRDAELEELLSKLPIY.

A signal peptide spans 1–22; it reads MEIKYLLTVFLVLLIVSDHCQA. Lys40 bears the Lysine amide mark. A propeptide spanning residues 46–74 is cleaved from the precursor; that stretch reads NLDGQIDRFRNFRKRDAELEELLSKLPIY.

It belongs to the non-disulfide-bridged peptide (NDBP) superfamily. Short antimicrobial peptide (group 4) family. Expressed by the venom gland.

The protein resides in the secreted. Its subcellular location is the target cell membrane. In terms of biological role, has antimicrobial activity against the Gram-positive bacteria S.aureus (MIC=8 uM) and the yeast C.albicans (MIC=16 uM). Causes hemolysis on horse erythrocytes (64 uM for 100% hemolysis). Minimum bactericidal concentrations have also been tested against S.aureus and is four-fold higher (MBC=32 uM). The sequence is that of Antimicrobial peptide AcrAP2 from Androctonus crassicauda (Arabian fat-tailed scorpion).